Consider the following 199-residue polypeptide: Recombination protein RecR (199 aa).

The segment at 58–73 adopts a C4-type zinc-finger fold; the sequence is CSICNNITDVDPCTYC. Positions 81–176 constitute a Toprim domain; it reads QVICVVEEPT…RVTRIATGVP (96 aa).

The protein belongs to the RecR family.

Functionally, may play a role in DNA repair. It seems to be involved in an RecBC-independent recombinational process of DNA repair. It may act with RecF and RecO. This chain is Recombination protein RecR, found in Koribacter versatilis (strain Ellin345).